We begin with the raw amino-acid sequence, 369 residues long: Glycolate oxidase 5 (369 aa).

The region spanning 1–360 (MGEITNVTEY…TRNHVITEAD (360 aa)) is the FMN hydroxy acid dehydrogenase domain. Y25 provides a ligand contact to glyoxylate. Residues 78–80 (PSA), S107, 128–130 (QLY), and T156 contribute to the FMN site. Y130 is a glyoxylate binding site. Position 165 (R165) interacts with glyoxylate. 2 residues coordinate FMN: K231 and S253. 2 residues coordinate glyoxylate: H255 and R258. H255 acts as the Proton acceptor in catalysis. Residues 286-290 (DGGVR) and 309-310 (GR) each bind FMN. Positions 367–369 (SRL) match the Microbody targeting signal motif.

It belongs to the FMN-dependent alpha-hydroxy acid dehydrogenase family. In terms of assembly, homotetramer. It depends on FMN as a cofactor.

The protein resides in the peroxisome. It carries out the reaction glycolate + O2 = glyoxylate + H2O2. It functions in the pathway photosynthesis; photorespiration; glycine from 2-phosphoglycolate: step 2/3. Catalyzes the oxidation of glycolate to glyoxylate, with a reduction of O2 to H2O2. Is a key enzyme in photorespiration in green plants. The chain is Glycolate oxidase 5 (GLO5) from Oryza sativa subsp. japonica (Rice).